A 132-amino-acid polypeptide reads, in one-letter code: Homeobox protein HD-4 (132 aa).

The segment at residues 29–88 is a DNA-binding region (homeobox); that stretch reads GLSGYRYKTHIQVYVLTKIFEITQYPSHDTRQNLAILLNMSPRTIQIWFQNSRSVSRGAA. The interval 82–101 is disordered; that stretch reads SVSRGAAKKKVSKDNGPQEA.

Its subcellular location is the nucleus. The polypeptide is Homeobox protein HD-4 (HD-4) (Encephalitozoon cuniculi (strain GB-M1) (Microsporidian parasite)).